We begin with the raw amino-acid sequence, 700 residues long: MARTTPIERYRNIGISAHIDAGKTTTSERILFYTGVSHKLGEVHDGAATMDWMEQEQERGITITSAATTAFWSGMSKQYPQHRINVIDTPGHVDFTIEVERSMRVLDGAVMVYCAVGGVQPQSETVWRQANKYQVPRVAFVNKMDRTGANFLRVVEQIKTRLGGNSVPLQLPIGSEDNFKGVVDLVKMKAINWNEADQGMTFTYEEIPADMVDACEEWRQNLVESAAEASEELMEKYLGGEELTEEEIKAGLRQRVLAGEIIPVCCGSAFKNKGVQAMLDAVIDYLPAPTDIPAIKGINPDETEGERHASDDEPFSALAFKIATDPFVGNLTFFRVYSGVINSGDTVLNSVKDKRERFGRIVQMHANKREEIKEVRAGDIAAAIGLKDVGTGDTLCAQDAPIILERMEFPEPVISVAVEPKTKADQEKMGLALGRLAQEDPSFRVHTDEESGETIISGMGELHLDIIVDRMRREFKVEANIGKPQVSYRETIRTRVNDVEGKHAKQSGGRGQYGHVVIDLYPLDPEGPGYEFVNEIKGGVIPGEYIPAVDKGVQEQLKSGPLAGYPVVDLGVRLHFGSYHDVDSSELAFKLAASLAFKAAFNKANPVLLEPIMKVEVETPPDYVGDVIGDLSRRRAMVNGQEANEFVVKINAEVPLSEMFGYATDLRSQTQGRASYSMEPLKYAEAPKNVADAIIEARKK.

One can recognise a tr-type G domain in the interval 8–290 (ERYRNIGISA…AVIDYLPAPT (283 aa)). Residues 17–24 (AHIDAGKT), 88–92 (DTPGH), and 142–145 (NKMD) each bind GTP.

The protein belongs to the TRAFAC class translation factor GTPase superfamily. Classic translation factor GTPase family. EF-G/EF-2 subfamily.

It is found in the cytoplasm. In terms of biological role, catalyzes the GTP-dependent ribosomal translocation step during translation elongation. During this step, the ribosome changes from the pre-translocational (PRE) to the post-translocational (POST) state as the newly formed A-site-bound peptidyl-tRNA and P-site-bound deacylated tRNA move to the P and E sites, respectively. Catalyzes the coordinated movement of the two tRNA molecules, the mRNA and conformational changes in the ribosome. The sequence is that of Elongation factor G (fusA) from Pasteurella multocida (strain Pm70).